Consider the following 428-residue polypeptide: MPNVVIIGAQWGDEGKGKIVDLLTRDTDYVVRFQGGNNAGHTVIVDGKTYILHLIPSGILHKEKICIIGNGVVLDPQIFIQELDTLLSQGIDVSPNRLKLSTKTHLIMPYHKLLDQVRENASTTQKIGTTGRGIGPCYEDKVSRIGIRTIDLTQPKLLYKKIELALKEKNTLFTQLYNTEFVNAETIFNEVMETASRILPYLSDTSSILQDAFIKNKKVIFEGAQGVHLDIDHGTYPFVTSSNTIAANASIGSGIALSSTEKIIGIVKAYTTRVGSGPFPTELYDNTGKFLQEKGHEYGATTGRPRRCGWQDLVMLKDSVRLNGFTELALTKLDVLSGLKKINICTSYAYQGESVTYPPQDEHILFNEIKPIYETMPGWEHSLESCTSWNQLPQCAKNYIERIEQVVGVPITIISVGADRNQTLFRDI.

Residues 12 to 18 (GDEGKGK) and 40 to 42 (GHT) each bind GTP. Residue Asp-13 is the Proton acceptor of the active site. Mg(2+)-binding residues include Asp-13 and Gly-40. Residues 13-16 (DEGK), 38-41 (NAGH), Thr-130, Arg-144, Gln-225, Thr-240, and Arg-304 contribute to the IMP site. His-41 serves as the catalytic Proton donor. 300 to 306 (ATTGRPR) is a binding site for substrate. GTP-binding positions include Arg-306, 332–334 (KLD), and 415–417 (SVG).

This sequence belongs to the adenylosuccinate synthetase family. In terms of assembly, homodimer. The cofactor is Mg(2+).

It is found in the cytoplasm. It carries out the reaction IMP + L-aspartate + GTP = N(6)-(1,2-dicarboxyethyl)-AMP + GDP + phosphate + 2 H(+). It participates in purine metabolism; AMP biosynthesis via de novo pathway; AMP from IMP: step 1/2. In terms of biological role, plays an important role in the de novo pathway of purine nucleotide biosynthesis. Catalyzes the first committed step in the biosynthesis of AMP from IMP. In Lawsonia intracellularis (strain PHE/MN1-00), this protein is Adenylosuccinate synthetase.